A 298-amino-acid polypeptide reads, in one-letter code: Small ribosomal subunit protein uS2 (298 aa).

It belongs to the universal ribosomal protein uS2 family.

In Leifsonia xyli subsp. xyli (strain CTCB07), this protein is Small ribosomal subunit protein uS2.